A 345-amino-acid chain; its full sequence is Platelet-derived growth factor C (345 aa).

Residues 1 to 22 form the signal peptide; that stretch reads MLLLGLLLLTSALAGQRTGTRA. Polar residues predominate over residues 24–33; the sequence is SNLSSKLQLS. Positions 24-45 are disordered; it reads SNLSSKLQLSSDKEQNGVQDPR. An N-linked (GlcNAc...) asparagine glycan is attached at asparagine 25. Residues 34–45 are compositionally biased toward basic and acidic residues; it reads SDKEQNGVQDPR. One can recognise a CUB domain in the interval 46-163; sequence HERVVTISGN…PGFCIHYSII (118 aa). N-linked (GlcNAc...) asparagine glycosylation occurs at asparagine 55. Cystine bridges form between cysteine 104–cysteine 124, cysteine 250–cysteine 294, cysteine 280–cysteine 335, and cysteine 287–cysteine 337.

It belongs to the PDGF/VEGF growth factor family. Homodimer; disulfide-linked. Interacts with PDGFRA homodimers, and with heterodimers formed by PDGFRA and PDGFRB. Interacts (via CUB domain) with PLAT (via kringle domain). Post-translationally, proteolytic removal of the N-terminal CUB domain releasing the core domain is necessary for unmasking the receptor-binding epitopes of the core domain. Cleavage after basic residues in the hinge region (region connecting the CUB and growth factor domains) gives rise to the receptor-binding form. Cleaved by PLAT and PLG. Sumoylated with SUMO1. In terms of processing, N-glycosylated. Highly expressed in the kidney and adrenal gland. In the kidney, it is expressed in arteriolar smooth muscle cells and in epithelial cells of individual segments (at protein level).

The protein localises to the cytoplasm. The protein resides in the cytosol. Its subcellular location is the secreted. It localises to the nucleus. It is found in the cytoplasmic granule. The protein localises to the cell membrane. Its function is as follows. Growth factor that plays an essential role in the regulation of embryonic development, cell proliferation, cell migration, survival and chemotaxis. Potent mitogen and chemoattractant for cells of mesenchymal origin. Required for normal skeleton formation during embryonic development, especially for normal development of the craniofacial skeleton and for normal development of the palate. Required for normal skin morphogenesis during embryonic development. Plays an important role in wound healing, where it appears to be involved in three stages: inflammation, proliferation and remodeling. Plays an important role in angiogenesis and blood vessel development. Involved in fibrotic processes, in which transformation of interstitial fibroblasts into myofibroblasts plus collagen deposition occurs. The CUB domain has mitogenic activity in coronary artery smooth muscle cells, suggesting a role beyond the maintenance of the latency of the PDGF domain. In the nucleus, PDGFC seems to have additional function. This Rattus norvegicus (Rat) protein is Platelet-derived growth factor C (Pdgfc).